The sequence spans 210 residues: Pre-mRNA-splicing factor 38 (210 aa).

The tract at residues 181–210 is disordered; sequence PLSSSSDEEDDDEEQISKLESNEGAVDRNI. A compositionally biased stretch (basic and acidic residues) spans 195-210; sequence QISKLESNEGAVDRNI.

Belongs to the PRP38 family. Component of the 25S U4/U6.U5 tri-snRNP particle, a subcomplex of the spliceosome.

It localises to the nucleus. Functionally, required for pre-mRNA splicing and maintenance of stable U6 small nuclear RNA levels. Implicated in the formation of stable and biologically active snRNP structures. As part of the U4/U6.U5 tri-snRNP particle, dispensible for spliceosome assembly, but required for conformational changes, which result in U4 snRNA release and the subsequent catalytic activation of the spliceosome. The protein is Pre-mRNA-splicing factor 38 of Schizosaccharomyces pombe (strain 972 / ATCC 24843) (Fission yeast).